The primary structure comprises 532 residues: Vesicular acetylcholine transporter unc-17 (532 aa).

Over 1–31 (MGFNVPVINRDSEILKADAKKWLEQQDNQKK) the chain is Cytoplasmic. A helical transmembrane segment spans residues 32–52 (CVLVIVSIALLLDNMLYMVIV). At 53 to 101 (PIIPKYLRDIHNYQVTFEGYHNETSQLANGTYLVREVGGRINFLDEELE) the chain is on the lumenal, vesicle side. Residues Asn74 and Asn81 are each glycosylated (N-linked (GlcNAc...) asparagine). A helical transmembrane segment spans residues 102–121 (LGWLFASKALLQIFVNPFSG). At 122–130 (YIIDRVGYE) the chain is on the cytoplasmic side. A helical transmembrane segment spans residues 131 to 151 (IPMILGLCTMFFSTAIFALGK). Residues 152–160 (SYGVLLFAR) lie on the Lumenal, vesicle side of the membrane. The chain crosses the membrane as a helical span at residues 161-180 (SLQGFGSAFADTSGLAMIAD). The Cytoplasmic portion of the chain corresponds to 181 to 191 (RFTEENERSAA). A helical membrane pass occupies residues 192–213 (LGIALAFISFGCLVAPPFGSVL). Topologically, residues 214–219 (YSLAGK) are lumenal, vesicle. A helical membrane pass occupies residues 220-242 (PVPFLILSFVCLADAIAVFMVIN). Over 243 to 266 (PHRRGTDSHGEKVQGTPMWRLFMD) the chain is Cytoplasmic. The helical transmembrane segment at 267 to 286 (PFIACCSGALIMANVSLAFL) threads the bilayer. At 287-303 (EPTITTWMSEMMPDTPG) the chain is on the lumenal, vesicle side. The chain crosses the membrane as a helical span at residues 304 to 328 (WLVGVIWLPPFFPHVLGVYVTVKML). Residues 329–335 (RAFPHHT) are Cytoplasmic-facing. A helical transmembrane segment spans residues 336 to 356 (WAIAMVGLAMEGIACFAIPYT). Topologically, residues 357–367 (TSVMQLVIPLS) are lumenal, vesicle. The chain crosses the membrane as a helical span at residues 368–388 (FVCFGIALIDTSLLPMLGHLV). At 389–393 (DTRHV) the chain is on the cytoplasmic side. Residues 394-412 (SVYGSVYAIADISYSLAYA) form a helical membrane-spanning segment. Over 413–418 (FGPIIA) the chain is Lumenal, vesicle. A helical membrane pass occupies residues 419–440 (GWIVTNWGFTALNIIIFATNVT). Residues 441–532 (YAPVLFLLRK…AGYDPLNPQW (92 aa)) lie on the Cytoplasmic side of the membrane.

It belongs to the major facilitator superfamily. Vesicular transporter family. As to expression, detected in most regions of the nervous system including the nerve ring, the ventral and dorsal nerve cords, and the pharyngeal nervous system. Expressed in most cholinergic neurons. In addition, expressed in SIA, SIB and SMB sublateral motor neurons.

The protein localises to the cytoplasmic vesicle. The protein resides in the secretory vesicle. It is found in the synaptic vesicle membrane. Functionally, involved in acetylcholine transport into synaptic vesicles. This chain is Vesicular acetylcholine transporter unc-17, found in Caenorhabditis elegans.